The following is a 159-amino-acid chain: MKFLVILTLCIAGAIAHCDKAPFIKASWNQVKHNEVDILYTVFKAYPEIQDRFPQFAGKDLEAIKETAEFAVHSTRIVSFMSEIVSLVGNPAVQSSIDLLLVKMANDHKARGVTKELFEKFNIAFMGYLKSHTTWDKKTENAWKVVGDEHHAIVYSILE.

Positions 1-16 are cleaved as a signal peptide; that stretch reads MKFLVILTLCIAGAIA. The 143-residue stretch at 17 to 159 folds into the Globin domain; the sequence is HCDKAPFIKA…HHAIVYSILE (143 aa). Residues H73 and H108 each contribute to the heme b site.

This sequence belongs to the globin family.

The sequence is that of Globin CTT-W (CTT-W) from Chironomus thummi thummi (Midge).